A 530-amino-acid chain; its full sequence is ATP-dependent RNA helicase DBP3 (530 aa).

Positions 1-20 (MSKDEIKDKKRKSEEYEVVD) are enriched in basic and acidic residues. The interval 1–77 (MSKDEIKDKK…VASVSTSSTV (77 aa)) is disordered. Positions 19–58 (VDKKKHKKDKKDKKEKKDKKEKKLKKDKKDKKDKKETKSE) form a coiled coil. Residues 21 to 50 (KKKHKKDKKDKKEKKDKKEKKLKKDKKDKK) show a composition bias toward basic residues. The segment covering 67-77 (SVASVSTSSTV) has biased composition (low complexity). The Q motif signature appears at 117–143 (LSFSHISLDSRIQAEISKFPKPTPIQA). The Helicase ATP-binding domain maps to 146-322 (WPYLLAGKDV…STFMNSPIKV (177 aa)). 159–166 (AETGSGKT) contributes to the ATP binding site. The DEAD box motif lies at 269–272 (DEAD). In terms of domain architecture, Helicase C-terminal spans 351-500 (KLLELLKKYQ…PVPEELKKFG (150 aa)).

This sequence belongs to the DEAD box helicase family. DDX5/DBP2 subfamily.

The protein resides in the nucleus. It is found in the nucleolus. The catalysed reaction is ATP + H2O = ADP + phosphate + H(+). Functionally, ATP-dependent RNA helicase required for 60S ribosomal subunit synthesis. Involved in efficient pre-rRNA processing, predominantly at site A3, which is necessary for the normal formation of 25S and 5.8S rRNAs. This Vanderwaltozyma polyspora (strain ATCC 22028 / DSM 70294 / BCRC 21397 / CBS 2163 / NBRC 10782 / NRRL Y-8283 / UCD 57-17) (Kluyveromyces polysporus) protein is ATP-dependent RNA helicase DBP3 (DBP3).